Consider the following 1687-residue polypeptide: Gag-Pol polyprotein (1687 aa).

Gly2 carries N-myristoyl glycine; by host lipidation. 4 disordered regions span residues 107–126 (GQDN…SRLP), 136–195 (LLSE…STVA), 420–447 (HKRE…DRRQ), and 466–485 (GRQA…EGRP). The short motif at 108–111 (QDNG) is the PTAP/PSAP motif element. A compositionally biased stretch (pro residues) spans 139-153 (EPPPYPTSPPPPPAP). The PPXY motif motif lies at 140-143 (PPPY). Positions 408-453 (LQDLIKEAEKVYHKRETEEEKQEREKKETEERERRRDRRQEKNLTK) form a coiled coil. The CCHC-type zinc-finger motif lies at 490-507 (DQCAYCKERGHWARECPR). Residues 544–614 (TEFLVDTGAE…CPAPLLGRDL (71 aa)) form the Peptidase A2 domain. Asp549 functions as the Protease; shared with dimeric partner in the catalytic mechanism. The 192-residue stretch at 721–912 (LDLGILVPCQ…EEVTYLGYLL (192 aa)) folds into the Reverse transcriptase domain. The Mg(2+) site is built by Asp789, Asp863, Asp864, Asp1162, Glu1200, Asp1221, and Asp1291. The RNase H type-1 domain occupies 1153–1299 (LPGVPAWYTD…ADEAAKQAAQ (147 aa)). The HHCC-type zinc-finger motif lies at 1339–1377 (HQLTHLGPDKLLQLVGRTSFHIPNLQSVVREITSKCQVC). Residues 1394–1552 (RGDRPGVYWE…TPYEILHGGP (159 aa)) enclose the Integrase catalytic domain. Mg(2+) contacts are provided by Asp1405 and Asp1464.

Homohexamer; further associates as homomultimer. The virus core is composed of a lattice formed from hexagonal rings, each containing six capsid monomers. In terms of assembly, interacts (via PPXY motif) with host NEDD4. Interacts (via PSAP motif) with host TSG101. As to quaternary structure, the reverse transcriptase is a monomer (Potential). Interacts (via RNase domains) with host release factor ETF1; this interaction is essential for translational readthrough of amber codon between viral gag and pol genes, as well as for viral replication. Homodimer. The cofactor is Mg(2+). In terms of processing, specific enzymatic cleavages by the viral protease yield mature proteins. The protease is released by autocatalytic cleavage. The polyprotein is cleaved during and after budding, this process is termed maturation. Phosphorylated on serine residues.

The protein resides in the virion. Its subcellular location is the host cell membrane. The protein localises to the host late endosome membrane. It is found in the host endosome. It localises to the host multivesicular body. The protein resides in the host cytoplasm. It carries out the reaction DNA(n) + a 2'-deoxyribonucleoside 5'-triphosphate = DNA(n+1) + diphosphate. It catalyses the reaction Endonucleolytic cleavage to 5'-phosphomonoester.. Protease: Most efficiently inhibited by Amprenavir, which is able to block Gag-Pol processing in infected cells. Functionally, plays a role in budding and is processed by the viral protease during virion maturation outside the cell. During budding, it recruits, in a PPXY-dependent or independent manner, Nedd4-like ubiquitin ligases that conjugate ubiquitin molecules to Gag-Pol, or to Gag-Pol binding host factors. Interaction with HECT ubiquitin ligases probably links the viral protein to the host ESCRT pathway and facilitates release. In terms of biological role, targets Gag and gag-pol polyproteins to the plasma membrane via a multipartite membrane binding signal, that includes its myristoylated N-terminus. Also mediates nuclear localization of the pre-integration complex. Its function is as follows. Constituent of the pre-integration complex (PIC) which tethers the latter to mitotic chromosomes. This allows the integration of the viral genome into the host DNA. Forms the spherical core of the virion that encapsulates the genomic RNA-nucleocapsid complex. Functionally, involved in the packaging and encapsidation of two copies of the genome. Binds with high affinity to conserved UCUG elements within the packaging signal, located near the 5'-end of the genome. This binding is dependent on genome dimerization. Acts as a nucleic acid chaperone which is involved in rearrangement of nucleic acid secondary structures during gRNA retrotranscription. In terms of biological role, protease: The aspartyl protease mediates proteolytic cleavages of Gag and Gag-Pol polyproteins during or shortly after the release of the virion from the plasma membrane. Cleavages take place as an ordered, step-wise cascade to yield mature proteins. This process is called maturation. Displays maximal activity during the budding process just prior to particle release from the cell. Its function is as follows. Reverse transcriptase/ribonuclease H: RT is a multifunctional enzyme that converts the viral dimeric RNA genome into dsDNA in the cytoplasm, shortly after virus entry into the cell. This enzyme displays a DNA polymerase activity that can copy either DNA or RNA templates, and a ribonuclease H (RNase H) activity that cleaves the RNA strand of RNA-DNA heteroduplexes in a partially processive 3' to 5' endonucleasic mode. Conversion of viral genomic RNA into dsDNA requires many steps. A tRNA binds to the primer-binding site (PBS) situated at the 5' end of the viral RNA. RT uses the 3' end of the tRNA primer to perform a short round of RNA-dependent minus-strand DNA synthesis. The reading proceeds through the U5 region and ends after the repeated (R) region which is present at both ends of viral RNA. The portion of the RNA-DNA heteroduplex is digested by the RNase H, resulting in a ssDNA product attached to the tRNA primer. This ssDNA/tRNA hybridizes with the identical R region situated at the 3' end of viral RNA. This template exchange, known as minus-strand DNA strong stop transfer, can be either intra- or intermolecular. RT uses the 3' end of this newly synthesized short ssDNA to perform the RNA-dependent minus-strand DNA synthesis of the whole template. RNase H digests the RNA template except for a polypurine tract (PPT) situated at the 5' end of the genome. It is not clear if both polymerase and RNase H activities are simultaneous. RNase H probably can proceed both in a polymerase-dependent (RNA cut into small fragments by the same RT performing DNA synthesis) and a polymerase-independent mode (cleavage of remaining RNA fragments by free RTs). Secondly, RT performs DNA-directed plus-strand DNA synthesis using the PPT that has not been removed by RNase H as primers. PPT and tRNA primers are then removed by RNase H. The 3' and 5' ssDNA PBS regions hybridize to form a circular dsDNA intermediate. Strand displacement synthesis by RT to the PBS and PPT ends produces a blunt ended, linear dsDNA copy of the viral genome that includes long terminal repeats (LTRs) at both ends. Catalyzes viral DNA integration into the host chromosome, by performing a series of DNA cutting and joining reactions. This enzyme activity takes place after virion entry into a cell and reverse transcription of the RNA genome in dsDNA. The first step in the integration process is 3' processing. This step requires a complex comprising the viral genome, matrix protein and integrase. This complex is called the pre-integration complex (PIC). The integrase protein removes 2 nucleotides from each 3' end of the viral DNA, leaving recessed CA OH's at the 3' ends. In the second step that requires cell division, the PIC enters cell nucleus. In the third step, termed strand transfer, the integrase protein joins the previously processed 3' ends to the 5' ends of strands of target cellular DNA at the site of integration. The last step is viral DNA integration into host chromosome. The chain is Gag-Pol polyprotein (pro-pol) from Phascolarctos cinereus (Koala).